Reading from the N-terminus, the 486-residue chain is Probable glycine dehydrogenase (decarboxylating) subunit 2 (486 aa).

Lysine 273 is modified (N6-(pyridoxal phosphate)lysine).

This sequence belongs to the GcvP family. C-terminal subunit subfamily. In terms of assembly, the glycine cleavage system is composed of four proteins: P, T, L and H. In this organism, the P 'protein' is a heterodimer of two subunits. Pyridoxal 5'-phosphate is required as a cofactor.

The enzyme catalyses N(6)-[(R)-lipoyl]-L-lysyl-[glycine-cleavage complex H protein] + glycine + H(+) = N(6)-[(R)-S(8)-aminomethyldihydrolipoyl]-L-lysyl-[glycine-cleavage complex H protein] + CO2. The glycine cleavage system catalyzes the degradation of glycine. The P protein binds the alpha-amino group of glycine through its pyridoxal phosphate cofactor; CO(2) is released and the remaining methylamine moiety is then transferred to the lipoamide cofactor of the H protein. In Alkaliphilus oremlandii (strain OhILAs) (Clostridium oremlandii (strain OhILAs)), this protein is Probable glycine dehydrogenase (decarboxylating) subunit 2.